Consider the following 505-residue polypeptide: Protein disulfide-isomerase A3 (505 aa).

A signal peptide spans 1 to 24; sequence MRFSCLALLPGVALLLASALLASA. The 109-residue stretch at 25-133 folds into the Thioredoxin 1 domain; the sequence is SDVLELTDEN…IVSHLKKQAG (109 aa). Catalysis depends on nucleophile residues Cys-57 and Cys-60. Cysteines 57 and 60 form a disulfide. Residue Lys-61 is modified to N6-methyllysine. Cys-85 and Cys-92 are disulfide-bonded. Lys-129 bears the N6-succinyllysine mark. The residue at position 152 (Lys-152) is an N6-acetyllysine. Lys-218 carries the N6-succinyllysine modification. Lys-252 bears the N6-acetyllysine mark. Residue Thr-319 is modified to Phosphothreonine. Positions 343–485 constitute a Thioredoxin 2 domain; the sequence is SRDGKALERF…FISYLQREAT (143 aa). An N6-acetyllysine modification is found at Lys-362. Catalysis depends on nucleophile residues Cys-406 and Cys-409. A disulfide bond links Cys-406 and Cys-409. The disordered stretch occupies residues 484–505; sequence ATNPPIIQEEKPKKKKKAQEDL. Over residues 491–505 the composition is skewed to basic and acidic residues; that stretch reads QEEKPKKKKKAQEDL. The residue at position 494 (Lys-494) is an N6-acetyllysine. The Prevents secretion from ER signature appears at 502 to 505; sequence QEDL.

This sequence belongs to the protein disulfide isomerase family. In terms of assembly, part of the major histocompatibility complex class I (MHC I) peptide loading complex composed of TAP1, TAP2, B2M, MHC heavy chain, TAPBP, PDIA3, and CALR. Interacts with ERP27 and CANX. Interacts with SERPINA2 and with SERPINA1. Interacts with ATP2A2. Post-translationally, within the major histocompatibility complex class I (MHC I) peptide loading complex forms reversible disulfide-linked heterodimers with TAPBP as part of its protein folding chaperone activity. This is essential to assist the dynamic assembly of the MHC I complex with high affinity antigens in the endoplasmic reticulum. In terms of processing, phosphorylated. In caput epididymal spermatozoa, detected in the head, mid and principal pieces. In cauda epididymal spermatozoa detected only in the acrosome (at protein level).

It localises to the endoplasmic reticulum. Its subcellular location is the endoplasmic reticulum lumen. It is found in the melanosome. The catalysed reaction is Catalyzes the rearrangement of -S-S- bonds in proteins.. With respect to regulation, seems to be inhibited by acidic phospholipids. Functionally, protein disulfide isomerase that catalyzes the formation, isomerization, and reduction or oxidation of disulfide bonds in client proteins and functions as a protein folding chaperone. Core component of the major histocompatibility complex class I (MHC I) peptide loading complex where it functions as an essential folding chaperone for TAPBP. Through TAPBP, assists the dynamic assembly of the MHC I complex with high affinity antigens in the endoplasmic reticulum. Therefore, plays a crucial role in the presentation of antigens to cytotoxic T cells in adaptive immunity. The chain is Protein disulfide-isomerase A3 (Pdia3) from Rattus norvegicus (Rat).